The chain runs to 336 residues: Glucokinase (336 aa).

13–18 lines the ATP pocket; it reads ADVGGT.

This sequence belongs to the bacterial glucokinase family.

Its subcellular location is the cytoplasm. It carries out the reaction D-glucose + ATP = D-glucose 6-phosphate + ADP + H(+). This chain is Glucokinase, found in Cupriavidus metallidurans (strain ATCC 43123 / DSM 2839 / NBRC 102507 / CH34) (Ralstonia metallidurans).